Reading from the N-terminus, the 328-residue chain is MKENFWSELPRPFFILAPMEDVTDIVFRHVVSEAARPDVFFTEFTNTESFCHPEGIHSVRGRLTFSEDEHPMVAHIWGDKPEQFRETSIQLAKMGFKGIDLNMGCPVANVAKKGKGSGLILRPDVAAEIIQATKAGGLPVSVKTRLGYYEIDEWKDWLKHVFEQDIANLSIHLRTRKEMSKVDAHWELIEAIKNLRDEIAPNTLLTINGDIPDRKTGLELAEKYGIDGVMIGRGIFHNPFAFEKEPREHTSKELLDLLRLHLSLFNKYEKDEIRQFKSLRRFFKIYVRGIRGASELRHQLMNTQSIAEARALLDEFEAQMDEDVKIEL.

Position 18 to 20 (18 to 20 (PME)) interacts with FMN. Residue Cys-105 is the Proton donor of the active site. Residues Lys-143, 208 to 210 (NGD), and 232 to 233 (GR) contribute to the FMN site.

The protein belongs to the Dus family. The cofactor is FMN.

It carries out the reaction a 5,6-dihydrouridine in tRNA + NAD(+) = a uridine in tRNA + NADH + H(+). The enzyme catalyses a 5,6-dihydrouridine in tRNA + NADP(+) = a uridine in tRNA + NADPH + H(+). Functionally, catalyzes the synthesis of 5,6-dihydrouridine (D), a modified base found in the D-loop of most tRNAs, via the reduction of the C5-C6 double bond in target uridines. This Staphylococcus aureus (strain Mu50 / ATCC 700699) protein is Probable tRNA-dihydrouridine synthase (dus).